The chain runs to 633 residues: Heterogeneous nuclear ribonucleoprotein R (633 aa).

A disordered region spans residues 1–24; the sequence is MANQVNGNAVQLKEEEEPMDTSSV. At Ala2 the chain carries N-acetylalanine. Glycyl lysine isopeptide (Lys-Gly) (interchain with G-Cter in SUMO2) cross-links involve residues Lys13 and Lys171. RRM domains lie at 165–244, 246–328, and 341–411; these read TEVF…ISVA, NRLF…WADP, and KVLF…LAKP. Lys359 participates in a covalent cross-link: Glycyl lysine isopeptide (Lys-Gly) (interchain with G-Cter in SUMO2). Lys366 carries the N6-acetyllysine modification. Positions 412–418 match the Nuclear localization signal motif; the sequence is PDKKRKE. The interval 412-456 is disordered; the sequence is PDKKRKERQAARQASRSTAYEDYYYHPPPRMPPPIRGRGRGGGRG. A compositionally biased stretch (pro residues) spans 437–446; sequence HPPPRMPPPI. Residues 447 to 567 are RNA-binding RGG-box; sequence RGRGRGGGRG…SRGSRGNRGG (121 aa). Residues 462–471 form a 1; approximate repeat; the sequence is PDYYGYEDYY. The 3 X 11 AA approximate repeats of D-D-Y-Y-G-Y-D-Y-H-D-Y stretch occupies residues 462 to 497; that stretch reads PDYYGYEDYYDDYYGYDYHDYRGGYEDPYYGYDDGY. Residues 472–482 form repeat 2; sequence DDYYGYDYHDY. The 3; approximate repeat unit spans residues 488–497; that stretch reads DPYYGYDDGY. Residues 501 to 510 are compositionally biased toward gly residues; the sequence is GRGGGRGGRG. Residues 501–633 form a disordered region; sequence GRGGGRGGRG…YQDTYGQQWK (133 aa). Pro residues predominate over residues 511-524; it reads APPPPRGRGAPPPR. The segment covering 525-541 has biased composition (low complexity); the sequence is GRAGYSQRGAPLGPPRG. Residues 558 to 570 show a composition bias toward gly residues; the sequence is SRGSRGNRGGNVG. Over residues 588 to 604 the composition is skewed to polar residues; that stretch reads TNNQQNWGSQPIAQQPL. Residues 605-621 show a composition bias toward low complexity; sequence QQGGDYSGNYGYNNDNQ. Over residues 622-633 the composition is skewed to polar residues; that stretch reads EFYQDTYGQQWK.

As to quaternary structure, identified in the spliceosome C complex. Identified in a IGF2BP1-dependent mRNP granule complex containing untranslated mRNAs. Interacts with GTPBP1.

The protein localises to the nucleus. It is found in the microsome. Its subcellular location is the nucleoplasm. The protein resides in the cytoplasm. Component of ribonucleosomes, which are complexes of at least 20 other different heterogeneous nuclear ribonucleoproteins (hnRNP). hnRNP play an important role in processing of precursor mRNA in the nucleus. This Homo sapiens (Human) protein is Heterogeneous nuclear ribonucleoprotein R (HNRNPR).